The primary structure comprises 482 residues: ATP synthase subunit beta, chloroplastic (482 aa).

ATP is bound at residue 168–175; it reads GGAGVGKT.

The protein belongs to the ATPase alpha/beta chains family. F-type ATPases have 2 components, CF(1) - the catalytic core - and CF(0) - the membrane proton channel. CF(1) has five subunits: alpha(3), beta(3), gamma(1), delta(1), epsilon(1). CF(0) has four main subunits: a(1), b(1), b'(1) and c(9-12).

The protein localises to the plastid. Its subcellular location is the chloroplast thylakoid membrane. The enzyme catalyses ATP + H2O + 4 H(+)(in) = ADP + phosphate + 5 H(+)(out). Its function is as follows. Produces ATP from ADP in the presence of a proton gradient across the membrane. The catalytic sites are hosted primarily by the beta subunits. This is ATP synthase subunit beta, chloroplastic from Gnetum parvifolium (Small-leaved jointfir).